A 429-amino-acid chain; its full sequence is MSEPLLRGLAAGDPPSATGPVTGSADKVADVLIVGGGLVGGTLACALAEKGVSVVVIDGEDPEALLAAGYDGRCSAIALACQRLLDTIGLWDLLGGESQPILDIRVVDGGSPLFLHYAQAEAQGPMGYMVENRLLRQAILTRLGRLPAATLLAPARMTALRRDLDGVSATLSDGQTVRARLVVGADGRRSQVRESAGIGIRTLGYGQTAIVLTVEHERSHRGCAVEHFLPAGPFAILPMPGNRSSLVWTERSDLVPGLLALPAEHFQAELERRFGDHLGWVRPVGPRFSYRLTLQAANRYVDHRLALVGDAAHGMHPVAGQGMNYGLRDVAVLAERLVAAQRLGLDPGAPALLAEYEALRRPDNLLMLAITDALVRLFSNDIAPVALARRLGIGAVERMGPLKRLFMRHAMGTLKLGPEPPRLMRGVPL.

The disordered stretch occupies residues 1–22 (MSEPLLRGLAAGDPPSATGPVT).

It belongs to the UbiH/COQ6 family. FAD is required as a cofactor.

The catalysed reaction is a 2-(all-trans-polyprenyl)phenol + NADPH + O2 + H(+) = a 3-(all-trans-polyprenyl)benzene-1,2-diol + NADP(+) + H2O. Its pathway is cofactor biosynthesis; ubiquinone biosynthesis. Its function is as follows. Catalyzes the hydroxylation of two positions of the aromatic ring during ubiquinone biosynthesis. The chain is Ubiquinone hydroxylase UbiL from Rhodospirillum rubrum (strain ATCC 11170 / ATH 1.1.1 / DSM 467 / LMG 4362 / NCIMB 8255 / S1).